A 963-amino-acid chain; its full sequence is Ubiquitin carboxyl-terminal hydrolase 4 (963 aa).

A DUSP domain is found at 11-122; the sequence is PDAETQKSEL…GQQPIVRKVV (112 aa). A necessary for interaction with SART3 region spans residues 27–216; that stretch reads TLQRGAQWYL…LYLGQVLVIE (190 aa). The Nuclear export signal signature appears at 133–141; the sequence is VEVYLLELK. The region spanning 142–226 is the Ubiquitin-like 1 domain; it reads LCENSDPTNV…PQNEDGTWPR (85 aa). Positions 220–255 are disordered; sequence EDGTWPRQTLQSKSSTAPSRNFTTSPKSSASPYSSV. Over residues 225–243 the composition is skewed to polar residues; the sequence is PRQTLQSKSSTAPSRNFTT. Residues 229 to 295 are required for USP4 activation by providing conformational flexibility between the DUSP and catalytic domains; the sequence is LQSKSSTAPS…SYNCQEPPSS (67 aa). The segment covering 244–255 has biased composition (low complexity); sequence SPKSSASPYSSV. In terms of domain architecture, USP spans 302–923; the sequence is CGLGNLGNTC…AAYVLFYQRR (622 aa). C311 (nucleophile) is an active-site residue. The regulates ubiquitin dissociation stretch occupies residues 384–386; the sequence is PQF. The tract at residues 405–407 is necessary for interaction with RBL2; the sequence is LHE. S445 carries the post-translational modification Phosphoserine. The segment at 459 to 463 is necessary for interaction with RB1 and RBL2; sequence LVCPE. Zn(2+) contacts are provided by C461 and C464. The 89-residue stretch at 483–571 folds into the Ubiquitin-like 2 domain; the sequence is LKKDRVMEVF…IFVYEVCSTS (89 aa). An interacts with DUSP and ubiquitin-like 1 domains and is required for USP4 activation region spans residues 485–775; sequence KDRVMEVFLV…LQPQKKKKTT (291 aa). The disordered stretch occupies residues 637 to 698; sequence DEFGSSPLEP…PSETTQKKIK (62 aa). The residue at position 655 (S655) is a Phosphoserine. The segment covering 657-666 has biased composition (acidic residues); the sequence is EGEDEEEMEH. Phosphoserine occurs at positions 675 and 680. The Nuclear localization signal signature appears at 767–772; sequence QPQKKK. Residues C799 and C802 each coordinate Zn(2+). H881 (proton acceptor) is an active-site residue. The tract at residues 928–963 is disordered; the sequence is YKTPSLSSSGSSDGGTRPSSSQQGLGDDEACSMDTN. Positions 932–948 are enriched in low complexity; that stretch reads SLSSSGSSDGGTRPSSS. Residues 953 to 963 are compositionally biased toward acidic residues; that stretch reads GDDEACSMDTN.

It belongs to the peptidase C19 family. USP4 subfamily. In terms of assembly, interacts with RB1 (both dephosphorylated and hypophosphorylated forms). Interacts with RBL1 and RBL2. Interacts with ADORA2A (via cytoplasmic C-terminus); the interaction is direct. Interacts with SART3; recruits USP4 to its substrate PRPF3. Post-translationally, phosphorylated at Ser-445 by PKB/AKT1 in response to EGF stimulus, promoting its ability deubiquitinate RHEB. In terms of processing, monoubiquitinated by TRIM21. Ubiquitination does not lead to its proteasomal degradation. Autodeubiquitinated.

It is found in the cytoplasm. It localises to the nucleus. It catalyses the reaction Thiol-dependent hydrolysis of ester, thioester, amide, peptide and isopeptide bonds formed by the C-terminal Gly of ubiquitin (a 76-residue protein attached to proteins as an intracellular targeting signal).. The completion of the deubiquitinase reaction is mediated by the DUSP and ubiquitin-like 1 domains which promotes the release of ubiquitin from the catalytic site enabling subsequent reactions to occur. Functionally, deubiquitinating enzyme that removes conjugated ubiquitin from target proteins. Deubiquitinates PDPK1. Deubiquitinates TRIM21. Deubiquitinates receptor ADORA2A which increases the amount of functional receptor at the cell surface. Deubiquitinates HAS2. Deubiquitinates RHEB in response to EGF signaling, promoting mTORC1 signaling. May regulate mRNA splicing through deubiquitination of the U4 spliceosomal protein PRPF3. This may prevent its recognition by the U5 component PRPF8 thereby destabilizing interactions within the U4/U6.U5 snRNP. May also play a role in the regulation of quality control in the ER. This is Ubiquitin carboxyl-terminal hydrolase 4 (USP4) from Pongo abelii (Sumatran orangutan).